Here is a 311-residue protein sequence, read N- to C-terminus: Ribose-phosphate pyrophosphokinase (311 aa).

ATP contacts are provided by residues 37–39 (DGE) and 96–97 (RQ). Mg(2+) is bound by residues His130 and Asp170. Lys193 is an active-site residue. Residues Arg195, Asp219, and 223–227 (DTAGT) contribute to the D-ribose 5-phosphate site.

This sequence belongs to the ribose-phosphate pyrophosphokinase family. Class I subfamily. In terms of assembly, homohexamer. Mg(2+) is required as a cofactor.

Its subcellular location is the cytoplasm. It catalyses the reaction D-ribose 5-phosphate + ATP = 5-phospho-alpha-D-ribose 1-diphosphate + AMP + H(+). It functions in the pathway metabolic intermediate biosynthesis; 5-phospho-alpha-D-ribose 1-diphosphate biosynthesis; 5-phospho-alpha-D-ribose 1-diphosphate from D-ribose 5-phosphate (route I): step 1/1. Its function is as follows. Involved in the biosynthesis of the central metabolite phospho-alpha-D-ribosyl-1-pyrophosphate (PRPP) via the transfer of pyrophosphoryl group from ATP to 1-hydroxyl of ribose-5-phosphate (Rib-5-P). This chain is Ribose-phosphate pyrophosphokinase, found in Aquifex aeolicus (strain VF5).